The sequence spans 141 residues: Transcription antitermination protein NusB (141 aa).

It belongs to the NusB family.

In terms of biological role, involved in transcription antitermination. Required for transcription of ribosomal RNA (rRNA) genes. Binds specifically to the boxA antiterminator sequence of the ribosomal RNA (rrn) operons. The protein is Transcription antitermination protein NusB of Clostridium botulinum (strain Loch Maree / Type A3).